Reading from the N-terminus, the 284-residue chain is Bifunctional protein FolD (284 aa).

NADP(+) contacts are provided by residues 166–168 (GAS) and Ile232.

Belongs to the tetrahydrofolate dehydrogenase/cyclohydrolase family. In terms of assembly, homodimer.

The enzyme catalyses (6R)-5,10-methylene-5,6,7,8-tetrahydrofolate + NADP(+) = (6R)-5,10-methenyltetrahydrofolate + NADPH. It carries out the reaction (6R)-5,10-methenyltetrahydrofolate + H2O = (6R)-10-formyltetrahydrofolate + H(+). It functions in the pathway one-carbon metabolism; tetrahydrofolate interconversion. Its function is as follows. Catalyzes the oxidation of 5,10-methylenetetrahydrofolate to 5,10-methenyltetrahydrofolate and then the hydrolysis of 5,10-methenyltetrahydrofolate to 10-formyltetrahydrofolate. The sequence is that of Bifunctional protein FolD from Pseudomonas aeruginosa (strain LESB58).